The sequence spans 30 residues: uncharacterized protein (30 aa).

Residues Met-1–Trp-30 form a disordered region.

This is an uncharacterized protein from Saccharomyces cerevisiae (strain ATCC 204508 / S288c) (Baker's yeast).